Reading from the N-terminus, the 391-residue chain is Na(+)/H(+) antiporter NhaA (391 aa).

Transmembrane regions (helical) follow at residues 14-34 (AGGI…NSPL), 59-79 (LLLW…GLEV), 95-115 (SLPT…YLFF), 124-144 (VGWA…MALL), 154-174 (VFLL…IALF), 177-197 (TDLS…LVAL), 213-233 (IILW…GVVI), 261-281 (FLIL…NVGF), 287-307 (PVPV…VLLF), 328-348 (IAPV…IASL), and 363-383 (IGIL…LSKV).

The protein belongs to the NhaA Na(+)/H(+) (TC 2.A.33) antiporter family.

The protein resides in the cell inner membrane. The catalysed reaction is Na(+)(in) + 2 H(+)(out) = Na(+)(out) + 2 H(+)(in). Its function is as follows. Na(+)/H(+) antiporter that extrudes sodium in exchange for external protons. The polypeptide is Na(+)/H(+) antiporter NhaA (Shewanella amazonensis (strain ATCC BAA-1098 / SB2B)).